The following is a 305-amino-acid chain: MIPVVCIVGPTGAGKTAASLHLAAVFDGAVINCDSRQVYKDFPVITAQPTLEEQASCPHHLYGFMGIQEKMSAGVFLDMACPIIKEEHAHGRLPLLVGGTGLYLRALLDGIAAIPDIPETVSQKWQERCAARGAPALHRLLEAQDPQTAERLHPNDSQRIVRALEVQEATGRPLSWWHAQPVPPSPYRAVKIGVSATLDGLTPRLAKRIEMMLAAGALDEARNAMGICDNPRAPGWSGIGCAELYSYIKGAVSLDECKRLWLHNTRQYAKRQLTWFRREPNLHWLDGTDMAAMERLVHSVAGSTG.

ATP is bound at residue 9–16 (GPTGAGKT). Position 11–16 (11–16 (TGAGKT)) interacts with substrate. Interaction with substrate tRNA regions lie at residues 34-37 (DSRQ) and 158-162 (QRIVR).

Belongs to the IPP transferase family. In terms of assembly, monomer. The cofactor is Mg(2+).

It carries out the reaction adenosine(37) in tRNA + dimethylallyl diphosphate = N(6)-dimethylallyladenosine(37) in tRNA + diphosphate. Catalyzes the transfer of a dimethylallyl group onto the adenine at position 37 in tRNAs that read codons beginning with uridine, leading to the formation of N6-(dimethylallyl)adenosine (i(6)A). The polypeptide is tRNA dimethylallyltransferase (Oleidesulfovibrio alaskensis (strain ATCC BAA-1058 / DSM 17464 / G20) (Desulfovibrio alaskensis)).